The chain runs to 727 residues: Probable copper-importing P-type ATPase A (727 aa).

Topologically, residues 1–94 are cytoplasmic; sequence MATNTKMETF…QTYLRKMKFD (94 aa). The HMA domain occupies 6 to 70; it reads KMETFVITGM…SVENIGYGAI (65 aa). Positions 17 and 20 each coordinate Cu(+). The helical transmembrane segment at 95-115 threads the bilayer; that stretch reads LIFSAILTLPLMLAMIAMMLG. Residues 116–119 lie on the Extracellular side of the membrane; that stretch reads SHGP. Residues 120 to 137 form a helical membrane-spanning segment; that stretch reads IVSFFHLSLVQLLFALPV. Residues 138–161 lie on the Cytoplasmic side of the membrane; that stretch reads QFYVGWRFYKGAYHALKTKAPNMD. A helical membrane pass occupies residues 162–181; it reads VLVAIGTSAAFALSIYNGFF. Over 182–187 the chain is Extracellular; the sequence is PSHSHD. Residues 188 to 203 traverse the membrane as a helical segment; it reads LYFESSSMIITLILLG. The Cytoplasmic segment spans residues 204–341; sequence KYLEHTAKSK…PIQQIADKIS (138 aa). The helical transmembrane segment at 342–362 threads the bilayer; the sequence is GIFVPIVLFLALVTLLVTGWL. The Extracellular portion of the chain corresponds to 363 to 375; that stretch reads TKDWQLALLHSVS. Residues 376 to 396 traverse the membrane as a helical segment; that stretch reads VLVIACPCALGLATPTAIMVG. The Cytoplasmic portion of the chain corresponds to 397 to 678; it reads TGVGAHNGIL…AATLKKIKQN (282 aa). Aspartate 425 (4-aspartylphosphate intermediate) is an active-site residue. Aspartate 621 and aspartate 625 together coordinate Mg(2+). A helical membrane pass occupies residues 679 to 698; it reads LFWAFIYNTIGIPFAAFGFL. Topologically, residues 699-700 are extracellular; it reads NP. Residues 701–721 traverse the membrane as a helical segment; it reads IIAGGAMAFSSISVLLNSLSL. The Cytoplasmic portion of the chain corresponds to 722-727; that stretch reads NRKTIK.

This sequence belongs to the cation transport ATPase (P-type) (TC 3.A.3) family. Type IB subfamily. As to quaternary structure, monomer. Interacts with the copper chaperone CopZ.

The protein localises to the cell membrane. It catalyses the reaction Cu(+)(in) + ATP + H2O = Cu(+)(out) + ADP + phosphate + H(+). Inhibited by vanadate. Its function is as follows. Probably involved in copper import under copper limiting conditions. In Enterococcus hirae (strain ATCC 9790 / DSM 20160 / JCM 8729 / LMG 6399 / NBRC 3181 / NCIMB 6459 / NCDO 1258 / NCTC 12367 / WDCM 00089 / R), this protein is Probable copper-importing P-type ATPase A (copA).